The following is an 810-amino-acid chain: Actin-regulating kinase PRK1 (810 aa).

The 277-residue stretch at 22-298 (AKIIKYLTSG…CQVLEEVSRL (277 aa)) folds into the Protein kinase domain. Residues 28-36 (LTSGGFAQV) and K56 contribute to the ATP site. D158 acts as the Proton acceptor in catalysis. Phosphoserine occurs at positions 402, 428, and 484. Disordered regions lie at residues 552 to 668 (FTGN…NVNI) and 733 to 761 (GVLDIKTKSNGKDKSRPPRPPPKPLHLRT). Phosphothreonine is present on T553. The segment covering 553-566 (TGNSVNNSRSASFD) has biased composition (polar residues). Residue S556 is modified to Phosphoserine. A compositionally biased stretch (low complexity) spans 567 to 588 (NNNVNGNGNNTNRRLVSSSTSS). Basic and acidic residues-rich tracts occupy residues 594–612 (SDTKRKEESDKNQRLEKRR) and 622–639 (FDQHERNNSRTGSRDYYR). Over residues 645 to 658 (KKTQASAKTTSKPT) the composition is skewed to low complexity. A compositionally biased stretch (basic and acidic residues) spans 733–748 (GVLDIKTKSNGKDKSR). The interval 743–756 (GKDKSRPPRPPPKP) is interaction with SH3 domain of ABP1.

It belongs to the protein kinase superfamily. Ser/Thr protein kinase family. As to quaternary structure, interacts with ABP1, which is required for proper actin patch localization.

The protein localises to the cytoplasm. It is found in the cytoskeleton. The protein resides in the actin patch. The catalysed reaction is L-seryl-[protein] + ATP = O-phospho-L-seryl-[protein] + ADP + H(+). The enzyme catalyses L-threonyl-[protein] + ATP = O-phospho-L-threonyl-[protein] + ADP + H(+). Its function is as follows. Protein kinase involved in the regulation of actin cytoskeleton organization and endocytosis. Phosphorylates PAN1 which disrupts the interaction between PAN1 and END3, and between PAN1 and SLA1. Phosphorylates SCD5. Preferentially, phosphorylates substrates on threonine residues in a [L/I/V/M]-x-x-[Q/N/T/S]-x-T-G motif. This chain is Actin-regulating kinase PRK1 (PRK1), found in Saccharomyces cerevisiae (strain ATCC 204508 / S288c) (Baker's yeast).